Here is a 366-residue protein sequence, read N- to C-terminus: Galactoside alpha-(1,2)-fucosyltransferase 1 (366 aa).

Residues 1-8 lie on the Cytoplasmic side of the membrane; it reads MWPRSHRH. The helical; Signal-anchor for type II membrane protein transmembrane segment at 9 to 25 threads the bilayer; that stretch reads LCLAFLLVCVLSAISFL. At 26–366 the chain is on the lumenal side; that stretch reads IHFHQDSIRH…LSPLWPLAEP (341 aa). N66, N302, and N328 each carry an N-linked (GlcNAc...) asparagine glycan.

The protein belongs to the glycosyltransferase 11 family.

It is found in the golgi apparatus. Its subcellular location is the golgi stack membrane. It catalyses the reaction a beta-D-galactosyl-(1-&gt;4)-N-acetyl-beta-D-glucosaminyl derivative + GDP-beta-L-fucose = an alpha-L-Fuc-(1-&gt;2)-beta-D-Gal-(1-&gt;4)-beta-D-GlcNAc derivative + GDP + H(+). The catalysed reaction is a ganglioside GA1 + GDP-beta-L-fucose = a ganglioside Fuc-GA1 + GDP + H(+). The enzyme catalyses a beta-D-Gal-(1-&gt;3)-beta-D-GlcNAc-(1-&gt;3)-beta-D-Gal-(1-&gt;4)-beta-D-Glc-(1&lt;-&gt;1')-Cer(d18:1(4E)) + GDP-beta-L-fucose = alpha-L-fucosyl-(1-&gt;2)- beta-D-galactosyl-(1-&gt;3)-N-acetyl-beta-D-glucosaminyl-(1-&gt;3)-beta-D-galactosyl-(1-&gt;4)-beta-D-glucosyl-(1&lt;-&gt;1')-N-acylsphing-4-enine + GDP + H(+). It carries out the reaction a neolactoside nLc4Cer(d18:1(4E)) + GDP-beta-L-fucose = a neolactoside IV(2)-alpha-Fuc-nLc4Cer(d18:1(4E)) + GDP + H(+). It catalyses the reaction a ganglioside GM1 + GDP-beta-L-fucose = a ganglioside Fuc-GM1 + GDP + H(+). The catalysed reaction is beta-D-galactosyl-(1-&gt;3)-N-acetyl-D-galactosamine + GDP-beta-L-fucose = alpha-L-fucosyl-(1-&gt;2)-beta-D-galactosyl-(1-&gt;3)-N-acetyl-D-galactosamine + GDP + H(+). It participates in protein modification; protein glycosylation. Functionally, catalyzes the transfer of L-fucose, from a guanosine diphosphate-beta-L-fucose, to the terminal galactose residue of glycoconjugates through an alpha(1,2) linkage leading to H antigen synthesis that is an intermediate substrate in the synthesis of ABO blood group antigens. H antigen is essential for maturation of the glomerular layer of the main olfactory bulb, in cell migration and early cell-cell contacts during tumor associated angiogenesis. Preferentially fucosylates soluble lactose and to a lesser extent fucosylates glycolipids gangliosides GA1 and GM1a. The polypeptide is Galactoside alpha-(1,2)-fucosyltransferase 1 (Saimiri boliviensis boliviensis (Bolivian squirrel monkey)).